The following is a 232-amino-acid chain: Protein Mis18-alpha (232 aa).

Residues Ser-36, Ser-39, and Ser-40 each carry the phosphoserine modification. Residues 79 to 177 (PLVFLCSGCR…SVEAIESYIL (99 aa)) enclose the Mis18 domain. Positions 84, 87, 140, and 143 each coordinate Zn(2+). Lys-161 is covalently cross-linked (Glycyl lysine isopeptide (Lys-Gly) (interchain with G-Cter in SUMO2)). At Ser-232 the chain carries Phosphoserine.

It belongs to the mis18 family. In terms of assembly, homodimer, and heterodimer with OIP5/MIS18B. Identified in a complex containing MIS18A, OIP5/MIS18B, MIS18BP1, RBBP7 and RBBP4.

The protein resides in the nucleus. It is found in the chromosome. Its subcellular location is the centromere. In terms of biological role, required for recruitment of CENPA to centromeres and normal chromosome segregation during mitosis. The chain is Protein Mis18-alpha (MIS18A) from Otolemur garnettii (Small-eared galago).